Here is a 374-residue protein sequence, read N- to C-terminus: Peptide chain release factor 2 (374 aa).

Gln-250 carries the N5-methylglutamine modification.

Belongs to the prokaryotic/mitochondrial release factor family. In terms of processing, methylated by PrmC. Methylation increases the termination efficiency of RF2.

The protein localises to the cytoplasm. Functionally, peptide chain release factor 2 directs the termination of translation in response to the peptide chain termination codons UGA and UAA. In Beutenbergia cavernae (strain ATCC BAA-8 / DSM 12333 / CCUG 43141 / JCM 11478 / NBRC 16432 / NCIMB 13614 / HKI 0122), this protein is Peptide chain release factor 2.